Here is a 291-residue protein sequence, read N- to C-terminus: G1/S-specific cyclin-D2 (291 aa).

The interval 261–291 (TRQQTQQRNSSKSVDELDQASTPTDVQDINL) is disordered. Residues 279-291 (QASTPTDVQDINL) are compositionally biased toward polar residues. Threonine 282 carries the post-translational modification Phosphothreonine.

This sequence belongs to the cyclin family. Cyclin D subfamily. In terms of assembly, interacts with the cdk4 and cdk6 protein kinases to form a serine/threonine kinase holoenzyme complex. The cyclin subunit imparts substrate specificity to the complex. Post-translationally, phosphorylation at Thr-282 by MAP kinases is required for ubiquitination and degradation by the DCX(AMBRA1) complex. Ubiquitinated by the DCX(AMBRA1) complex during the transition from G1 to S cell phase, leading to its degradation: ubiquitination is dependent on Thr-282 phosphorylation. The DCX(AMBRA1) complex represents the major regulator of CCND2 stability during the G1/S transition.

The protein resides in the nucleus. It is found in the cytoplasm. The protein localises to the nucleus membrane. Regulatory component of the cyclin D2-CDK4 (DC) complex that phosphorylates and inhibits members of the retinoblastoma (RB) protein family including RB1 and regulates the cell-cycle during G(1)/S transition. Phosphorylation of RB1 allows dissociation of the transcription factor E2F from the RB/E2F complex and the subsequent transcription of E2F target genes which are responsible for the progression through the G(1) phase. Hypophosphorylates RB1 in early G(1) phase. Cyclin D-CDK4 complexes are major integrators of various mitogenenic and antimitogenic signals. This is G1/S-specific cyclin-D2 (ccnd2) from Xenopus laevis (African clawed frog).